Here is a 337-residue protein sequence, read N- to C-terminus: Glyceraldehyde-3-phosphate dehydrogenase (337 aa).

NAD(+) is bound by residues 12-13 (RI), Asp34, and Arg79. D-glyceraldehyde 3-phosphate is bound by residues 150–152 (SCT), Thr181, 210–211 (TG), and Arg233. The active-site Nucleophile is the Cys151. Residue Asn315 coordinates NAD(+).

Belongs to the glyceraldehyde-3-phosphate dehydrogenase family. As to quaternary structure, homotetramer.

Its subcellular location is the cytoplasm. It carries out the reaction D-glyceraldehyde 3-phosphate + phosphate + NAD(+) = (2R)-3-phospho-glyceroyl phosphate + NADH + H(+). It functions in the pathway carbohydrate degradation; glycolysis; pyruvate from D-glyceraldehyde 3-phosphate: step 1/5. The polypeptide is Glyceraldehyde-3-phosphate dehydrogenase (GPD) (Podospora anserina (Pleurage anserina)).